Consider the following 308-residue polypeptide: uncharacterized protein (308 aa).

The first 17 residues, 1–17 (MKSLALLLSLLINFSIG), serve as a signal peptide directing secretion. 4 N-linked (GlcNAc...) asparagine glycosylation sites follow: N13, N91, N159, and N210. The interval 213 to 308 (DEISGGTGAG…HDNYISSFCT (96 aa)) is disordered. Gly residues-rich tracts occupy residues 217-231 (GGTG…GSGS) and 239-252 (SDGG…GSGS). Low complexity predominate over residues 267-284 (NKNNNKNKNNNNNNNNYN).

The protein localises to the secreted. This is an uncharacterized protein from Dictyostelium discoideum (Social amoeba).